An 87-amino-acid chain; its full sequence is Small ribosomal subunit protein bS20 (87 aa).

A disordered region spans residues 1 to 20 (MANHKSAEKRARQTIKKTER).

Belongs to the bacterial ribosomal protein bS20 family.

Functionally, binds directly to 16S ribosomal RNA. In Campylobacter jejuni subsp. jejuni serotype O:2 (strain ATCC 700819 / NCTC 11168), this protein is Small ribosomal subunit protein bS20.